A 331-amino-acid polypeptide reads, in one-letter code: Centriolar satellite-associated tubulin polyglutamylase complex regulator 1 (331 aa).

Residues 1-111 form a required for interaction with PCM1 region; it reads MLSPERLALP…HCLLQLLCPD (111 aa). The required for interaction with TPGS1, LRRC49, and TTLL1 stretch occupies residues 1-225; it reads MLSPERLALP…SCPPPALVKE (225 aa). The tract at residues 112-331 is required for interaction with TPGS2; sequence FPLELTQKAA…STEETDESET (220 aa). The interval 292–331 is disordered; the sequence is SCLPSRTPPRVGSPWKPLHRSRKLDAESDGSTEETDESET. Residues 318–331 are compositionally biased toward acidic residues; that stretch reads ESDGSTEETDESET. Residue serine 319 is modified to Phosphoserine.

The protein belongs to the CSTPP1 family. As to quaternary structure, interacts with PCM1. Interacts with TTLL1, TPGS1, TPGS2 and LRRC49; the interactions link CSTPP1 to the complex TPGC. Binds to alpha-tubulin.

It localises to the cytoplasm. The protein localises to the cytoskeleton. It is found in the microtubule organizing center. The protein resides in the centrosome. Its subcellular location is the centriolar satellite. In terms of biological role, regulator of the tubulin polyglutamylase complex (TPGC) that controls cytoskeletal organization, nuclear shape, and cilium disassembly by balancing microtubule and actin assembly. Regulates the assembly and stability of the TPGC and thereby modulates polyglutamylation of the microtubule, which antagonizes MAP4 binding. This Mus musculus (Mouse) protein is Centriolar satellite-associated tubulin polyglutamylase complex regulator 1.